A 51-amino-acid polypeptide reads, in one-letter code: UPF0181 protein HAPS_0710 (51 aa).

Belongs to the UPF0181 family.

The sequence is that of UPF0181 protein HAPS_0710 from Glaesserella parasuis serovar 5 (strain SH0165) (Haemophilus parasuis).